Consider the following 254-residue polypeptide: RNA polymerase sigma-D factor (254 aa).

Positions 54–67 match the Polymerase core binding motif; the sequence is DLMSLGMLGLYDAL. Positions 220–239 form a DNA-binding region, H-T-H motif; sequence LTEIGQVLNLSTSRISQIHS.

Monomer. Interacts transiently with the RNAP core.

Its function is as follows. Sigma factors are initiation factors that promote the attachment of RNA polymerase (RNAP) to specific initiation sites and are then released. This alternative sigma factor is required for the transcription of the flagellin and motility genes as well as for wild-type chemotaxis. Associates with the RNAP core during all growth phases with a peak at the transition to stationary phase. The chain is RNA polymerase sigma-D factor (sigD) from Bacillus subtilis (strain 168).